The primary structure comprises 490 residues: Bifunctional protein HldE (490 aa).

The interval 1 to 330 (MFSFDALLQA…RRILPHASLA (330 aa)) is ribokinase. 205-208 (NRKE) is an ATP binding site. Asp275 is a catalytic residue. Residues 358 to 490 (FTNGCFDILH…LVARAREGQS (133 aa)) are cytidylyltransferase.

It in the N-terminal section; belongs to the carbohydrate kinase PfkB family. In the C-terminal section; belongs to the cytidylyltransferase family. As to quaternary structure, homodimer.

It catalyses the reaction D-glycero-beta-D-manno-heptose 7-phosphate + ATP = D-glycero-beta-D-manno-heptose 1,7-bisphosphate + ADP + H(+). The enzyme catalyses D-glycero-beta-D-manno-heptose 1-phosphate + ATP + H(+) = ADP-D-glycero-beta-D-manno-heptose + diphosphate. It functions in the pathway nucleotide-sugar biosynthesis; ADP-L-glycero-beta-D-manno-heptose biosynthesis; ADP-L-glycero-beta-D-manno-heptose from D-glycero-beta-D-manno-heptose 7-phosphate: step 1/4. The protein operates within nucleotide-sugar biosynthesis; ADP-L-glycero-beta-D-manno-heptose biosynthesis; ADP-L-glycero-beta-D-manno-heptose from D-glycero-beta-D-manno-heptose 7-phosphate: step 3/4. In terms of biological role, catalyzes the phosphorylation of D-glycero-D-manno-heptose 7-phosphate at the C-1 position to selectively form D-glycero-beta-D-manno-heptose-1,7-bisphosphate. Its function is as follows. Catalyzes the ADP transfer from ATP to D-glycero-beta-D-manno-heptose 1-phosphate, yielding ADP-D-glycero-beta-D-manno-heptose. The sequence is that of Bifunctional protein HldE from Rhodopseudomonas palustris (strain ATCC BAA-98 / CGA009).